A 360-amino-acid polypeptide reads, in one-letter code: Aminomethyltransferase (360 aa).

The protein belongs to the GcvT family. The glycine cleavage system is composed of four proteins: P, T, L and H.

The catalysed reaction is N(6)-[(R)-S(8)-aminomethyldihydrolipoyl]-L-lysyl-[protein] + (6S)-5,6,7,8-tetrahydrofolate = N(6)-[(R)-dihydrolipoyl]-L-lysyl-[protein] + (6R)-5,10-methylene-5,6,7,8-tetrahydrofolate + NH4(+). Functionally, the glycine cleavage system catalyzes the degradation of glycine. This chain is Aminomethyltransferase, found in Legionella pneumophila (strain Corby).